The primary structure comprises 495 residues: 3-octaprenyl-4-hydroxybenzoate carboxy-lyase (495 aa).

Asn171 lines the Mn(2+) pocket. Residues 174–176, 188–190, and 193–194 contribute to the prenylated FMN site; these read IYR, RWL, and RG. Glu237 is a binding site for Mn(2+). The active-site Proton donor is the Asp286.

This sequence belongs to the UbiD family. As to quaternary structure, homohexamer. Prenylated FMN is required as a cofactor. It depends on Mn(2+) as a cofactor.

The protein localises to the cell membrane. The catalysed reaction is a 4-hydroxy-3-(all-trans-polyprenyl)benzoate + H(+) = a 2-(all-trans-polyprenyl)phenol + CO2. The protein operates within cofactor biosynthesis; ubiquinone biosynthesis. Its function is as follows. Catalyzes the decarboxylation of 3-octaprenyl-4-hydroxy benzoate to 2-octaprenylphenol, an intermediate step in ubiquinone biosynthesis. This Hamiltonella defensa subsp. Acyrthosiphon pisum (strain 5AT) protein is 3-octaprenyl-4-hydroxybenzoate carboxy-lyase.